The chain runs to 486 residues: Nucleolar protein 56 (486 aa).

A Nop domain is found at 298–416 (CAPSLSALIG…VEDRLEYFTS (119 aa)). Positions 450–486 (KKAKRLAEESVTATAEAEVDEDAPKPKKKKKSKAGDE) are disordered. Residues 475 to 486 (PKKKKKSKAGDE) show a composition bias toward basic residues.

Belongs to the NOP5/NOP56 family.

The protein resides in the nucleus. It is found in the nucleolus. Its function is as follows. Required for 60S ribosomal subunit synthesis. The chain is Nucleolar protein 56 from Caenorhabditis elegans.